A 121-amino-acid polypeptide reads, in one-letter code: ATP synthase epsilon chain (121 aa).

This sequence belongs to the ATPase epsilon chain family. F-type ATPases have 2 components, CF(1) - the catalytic core - and CF(0) - the membrane proton channel. CF(1) has five subunits: alpha(3), beta(3), gamma(1), delta(1), epsilon(1). CF(0) has three main subunits: a, b and c.

It is found in the cell membrane. Its function is as follows. Produces ATP from ADP in the presence of a proton gradient across the membrane. This Mycobacterium sp. (strain JLS) protein is ATP synthase epsilon chain.